The chain runs to 861 residues: Protein argonaute-4 (861 aa).

The 120-residue stretch at 219–338 (PIIEFMCEVL…LPLEVCNIVA (120 aa)) folds into the PAZ domain. The 312-residue stretch at 509-820 (LIVVILPGKT…VAFRARYHLV (312 aa)) folds into the Piwi domain. A disordered region spans residues 825–846 (DSAEGSHVSGQSNGRDPQALAK).

This sequence belongs to the argonaute family. Ago subfamily. As to quaternary structure, interacts with EIF4B, IMP8, PRMT5, TNRC6A and TNRC6B. Interacts with ZFP36. In terms of processing, ubiquitinated on surface-exposed lysines by a SCF-like E3 ubiquitin-protein ligase complex containing ZSWIM8 during target-directed microRNA degradation (TDMD), a process that mediates degradation of microRNAs (miRNAs). Ubiquitination by the SCF-like E3 ubiquitin-protein ligase complex containing ZSWIM8 leads to its subsequent degradation, thereby exposing miRNAs for degradation. ZSWIM8 recognizes and binds AGO4 when it is engaged with a TDMD target.

It localises to the cytoplasm. The protein resides in the P-body. Required for RNA-mediated gene silencing (RNAi). Binds to short RNAs such as microRNAs (miRNAs) and represses the translation of mRNAs which are complementary to them. Lacks endonuclease activity and does not appear to cleave target mRNAs. Also required for RNA-directed transcription and replication of the human hapatitis delta virus (HDV). The protein is Protein argonaute-4 (AGO4) of Homo sapiens (Human).